Here is a 366-residue protein sequence, read N- to C-terminus: Flagellar P-ring protein (366 aa).

An N-terminal signal peptide occupies residues 1 to 27 (MKSKYSIFCMFLLRGFIFLGTVFSLNS).

Belongs to the FlgI family. The basal body constitutes a major portion of the flagellar organelle and consists of four rings (L,P,S, and M) mounted on a central rod.

Its subcellular location is the periplasm. It localises to the bacterial flagellum basal body. Assembles around the rod to form the L-ring and probably protects the motor/basal body from shearing forces during rotation. This Leptospira interrogans serogroup Icterohaemorrhagiae serovar copenhageni (strain Fiocruz L1-130) protein is Flagellar P-ring protein.